Reading from the N-terminus, the 809-residue chain is F-BAR domain only protein 2 (809 aa).

The 248-residue stretch at 3-250 (MAHFVENFWG…NMANTTIESL (248 aa)) folds into the F-BAR domain. A mediates dimerization and binding to membranes enriched in Pi(4,5)-P2 and induces their tubulation region spans residues 3 to 274 (MAHFVENFWG…PGLIEFEECD (272 aa)). A coiled-coil region spans residues 87–156 (HLDLVRKLQE…CVEQERLKKE (70 aa)). A Glycyl lysine isopeptide (Lys-Gly) (interchain with G-Cter in SUMO2) cross-link involves residue Lys-297. The disordered stretch occupies residues 301-352 (DAESVECPDADSLNIPDVDEEGFSIKPEANQNDTKENHFYSSSDSDSEDEEP). Ser-312 is modified (phosphoserine). Residue Thr-385 is modified to Phosphothreonine. Phosphoserine is present on residues Ser-387, Ser-394, Ser-402, and Ser-403. Residues 390 to 416 (VSRHSPVQMNRNSSNEELTKSKPSSLP) are compositionally biased toward polar residues. Disordered stretches follow at residues 390–422 (VSRH…KGTN) and 435–536 (LESS…PVSL). Residues 435 to 456 (LESSSAPLTSSSSARPTTPLSL) are compositionally biased toward low complexity. Residues Ser-487, Ser-492, Ser-495, Ser-507, Ser-509, Ser-510, and Ser-532 each carry the phosphoserine modification. Residues 501–520 (PLARAESSSSISSSASLSAA) are compositionally biased toward low complexity. Residues 520–809 (ANTPTVGVSR…FATGRYLADC (290 aa)) form a mediates interaction with DAB2, EPS15, EPS15R and ITSN1 region. The MHD domain occupies 541-808 (TLPVAIALTE…RFATGRYLAD (268 aa)).

This sequence belongs to the FCHO family. Homodimer; disulfide-linked. May form homotetramer. Interacts with AP2A1. Interacts with EPS15, EPS15R, ITSN1 and ITSN2; recruit those scaffolding proteins which in turn may interact with the adaptor protein complex AP-2 at the plasma membrane. Interacts with DAB2 (via DPF motifs); mediates LDL receptor/LDLR endocytosis. Post-translationally, ubiquitinated. Mainly undergoes monoubiquitination but also polyubiquitination. In terms of tissue distribution, ubiquitously expressed (at protein level).

It is found in the membrane. The protein localises to the clathrin-coated pit. Functionally, functions in an early step of clathrin-mediated endocytosis. Has both a membrane binding/bending activity and the ability to recruit proteins essential to the formation of functional clathrin-coated pits. Has a lipid-binding activity with a preference for membranes enriched in phosphatidylserine and phosphoinositides (Pi(4,5) biphosphate) like the plasma membrane. Its membrane-bending activity might be important for the subsequent action of clathrin and adaptors in the formation of clathrin-coated vesicles. Involved in adaptor protein complex AP-2-dependent endocytosis of the transferrin receptor, it also functions in the AP-2-independent endocytosis of the LDL receptor. The polypeptide is F-BAR domain only protein 2 (Fcho2) (Mus musculus (Mouse)).